The chain runs to 287 residues: Endolytic peptidoglycan transglycosylase RlpA (287 aa).

Positions Met-1 to Ala-25 are cleaved as a signal peptide. The SPOR domain occupies Leu-209 to Thr-284.

Belongs to the RlpA family.

Lytic transglycosylase with a strong preference for naked glycan strands that lack stem peptides. The chain is Endolytic peptidoglycan transglycosylase RlpA from Haemophilus influenzae (strain ATCC 51907 / DSM 11121 / KW20 / Rd).